A 244-amino-acid polypeptide reads, in one-letter code: Gamma-gliadin (244 aa).

The disordered stretch occupies residues 18–64 (QQPFLQQPQQPSPQPQQVVQIISPATPTTIPSAGKPTSAPFPQQQQQ). The segment covering 35–48 (VVQIISPATPTTIP) has biased composition (polar residues).

Belongs to the gliadin/glutenin family.

Gliadin is the major seed storage protein in wheat. The sequence is that of Gamma-gliadin from Triticum aestivum (Wheat).